The chain runs to 121 residues: Large ribosomal subunit protein uL18 (121 aa).

This sequence belongs to the universal ribosomal protein uL18 family. Part of the 50S ribosomal subunit; part of the 5S rRNA/L5/L18/L25 subcomplex. Contacts the 5S and 23S rRNAs.

In terms of biological role, this is one of the proteins that bind and probably mediate the attachment of the 5S RNA into the large ribosomal subunit, where it forms part of the central protuberance. The polypeptide is Large ribosomal subunit protein uL18 (Albidiferax ferrireducens (strain ATCC BAA-621 / DSM 15236 / T118) (Rhodoferax ferrireducens)).